Reading from the N-terminus, the 170-residue chain is Small ribosomal subunit protein uS13m (170 aa).

Residues 130-170 (LKKKPTNRKERRIFNKIKKLQDKHNKQQQKNKKSKKWKTKK) are disordered. 2 stretches are compositionally biased toward basic residues: residues 132-147 (KKPT…NKIK) and 155-170 (KQQQ…KTKK).

This sequence belongs to the universal ribosomal protein uS13 family. In terms of assembly, part of the small ribosomal subunit.

The protein resides in the mitochondrion. In terms of biological role, located at the top of the head of the small subunit, it contacts several helices of the small subunit rRNA. The sequence is that of Small ribosomal subunit protein uS13m (mrps13) from Dictyostelium citrinum (Slime mold).